Reading from the N-terminus, the 207-residue chain is MRLIRMLLLPVLAVTTLSAHADPKDVARLTQLLEKSQTLTARFSQLTLDGSGTQLQETAGEMSLQRPGLFYWHTDAPQEQLMVSDGQKVSLWDPDLEQVTIKKLDQRLTQTPALLLSGDVSKISESFDITSKEAGGVMDFTLKPKTRDTLFDSLRLSFRNGMINDMQLIDSVGQRTNILFTGVKANEAIPASKFKFDIPKGADVIQE.

The first 21 residues, 1-21 (MRLIRMLLLPVLAVTTLSAHA), serve as a signal peptide directing secretion.

It belongs to the LolA family. In terms of assembly, monomer.

It localises to the periplasm. Participates in the translocation of lipoproteins from the inner membrane to the outer membrane. Only forms a complex with a lipoprotein if the residue after the N-terminal Cys is not an aspartate (The Asp acts as a targeting signal to indicate that the lipoprotein should stay in the inner membrane). This chain is Outer-membrane lipoprotein carrier protein, found in Pseudomonas fluorescens (strain ATCC BAA-477 / NRRL B-23932 / Pf-5).